Here is a 163-residue protein sequence, read N- to C-terminus: Ribonuclease P protein subunit p25-like protein (163 aa).

Disordered regions lie at residues 1–22 and 129–163; these read MEHYRKAGSVELPAPSPMPQLP and NECGYQPPGAPPGLGSMPSSSCGPRSRRRARDTRS. Positions 143–152 are enriched in low complexity; the sequence is GSMPSSSCGP. Basic residues predominate over residues 153–163; it reads RSRRRARDTRS.

The protein belongs to the histone-like Alba family.

The protein resides in the nucleus. May be a component of ribonuclease P or MRP. This is Ribonuclease P protein subunit p25-like protein (RPP25L) from Homo sapiens (Human).